The chain runs to 1102 residues: DNA-directed RNA polymerase subunit beta (1102 aa).

Residues 1076 to 1102 (IDSQRRAPNRPTYESLHTEEDLEEEEV) are disordered.

This sequence belongs to the RNA polymerase beta chain family. As to quaternary structure, in cyanobacteria the RNAP catalytic core is composed of 2 alpha, 1 beta, 1 beta', 1 gamma and 1 omega subunit. When a sigma factor is associated with the core the holoenzyme is formed, which can initiate transcription.

It carries out the reaction RNA(n) + a ribonucleoside 5'-triphosphate = RNA(n+1) + diphosphate. Its function is as follows. DNA-dependent RNA polymerase catalyzes the transcription of DNA into RNA using the four ribonucleoside triphosphates as substrates. This is DNA-directed RNA polymerase subunit beta from Synechocystis sp. (strain ATCC 27184 / PCC 6803 / Kazusa).